Consider the following 476-residue polypeptide: Angiotensinogen (476 aa).

The first 24 residues, 1 to 24, serve as a signal peptide directing secretion; the sequence is MAPAGMSLRATILCLLAWAGLAAG. N-linked (GlcNAc...) asparagine glycosylation is found at Asn-38, Asn-161, Asn-295, and Asn-319. A disulfide bridge connects residues Cys-42 and Cys-162.

Belongs to the serpin family. In terms of processing, in response to low blood pressure, the enzyme renin/REN cleaves angiotensinogen to produce angiotensin-1. Angiotensin-1 is a substrate of ACE (angiotensin converting enzyme) that removes a dipeptide to yield the physiologically active peptide angiotensin-2. Angiotensin-1 and angiotensin-2 can be further processed to generate angiotensin-3, angiotensin-4. Angiotensin 1-9 is cleaved from angiotensin-1 by ACE2 and can be further processed by ACE to produce angiotensin 1-7, angiotensin 1-5 and angiotensin 1-4. Angiotensin 1-7 has also been proposed to be cleaved from angiotensin-2 by ACE2 or from angiotensin-1 by MME (neprilysin). The disulfide bond is labile. Angiotensinogen is present in the circulation in a near 40:60 ratio with the oxidized disulfide-bonded form, which preferentially interacts with receptor-bound renin.

It localises to the secreted. Essential component of the renin-angiotensin system (RAS), a potent regulator of blood pressure, body fluid and electrolyte homeostasis. In terms of biological role, acts directly on vascular smooth muscle as a potent vasoconstrictor, affects cardiac contractility and heart rate through its action on the sympathetic nervous system, and alters renal sodium and water absorption through its ability to stimulate the zona glomerulosa cells of the adrenal cortex to synthesize and secrete aldosterone. Acts by binding to angiotensin receptors AGTR1 and AGTR2. Also binds the DEAR/FBXW7-AS1 receptor. Its function is as follows. Stimulates aldosterone release. Functionally, is a ligand for the G-protein coupled receptor MAS1. Has vasodilator and antidiuretic effects. Has an antithrombotic effect that involves MAS1-mediated release of nitric oxide from platelets. The polypeptide is Angiotensinogen (AGT) (Gorilla gorilla gorilla (Western lowland gorilla)).